Reading from the N-terminus, the 180-residue chain is UPF0690 protein C1orf52 homolog (180 aa).

2 disordered regions span residues 1 to 66 (MAAE…SVTR) and 96 to 180 (KIWK…KKKK). Residues 48–61 (KQAEKRLPGPDELF) are compositionally biased toward basic and acidic residues. A Phosphothreonine modification is found at Thr-65. Position 130 is a phosphotyrosine (Tyr-130). A compositionally biased stretch (acidic residues) spans 149-160 (EGEETVESDDDK). Residue Ser-156 is modified to Phosphoserine. Positions 161–180 (DERASKIRRVEPGEAAKKKK) are enriched in basic and acidic residues.

This sequence belongs to the UPF0690 family.

The polypeptide is UPF0690 protein C1orf52 homolog (Mus musculus (Mouse)).